Consider the following 890-residue polypeptide: Translation initiation factor IF-2 (890 aa).

Residues Leu45–Gln304 are disordered. Residues Ser67–Val81 are compositionally biased toward polar residues. Positions Val92 to Asp217 are enriched in basic and acidic residues. The segment covering Gly252–Asn266 has biased composition (basic residues). Residues Lys267–Ala280 are compositionally biased toward basic and acidic residues. A tr-type G domain is found at Pro389–Lys558. Residues Gly398–Thr405 form a G1 region. Gly398–Thr405 is a binding site for GTP. The G2 stretch occupies residues Gly423–His427. The segment at Asp444–Gly447 is G3. Residues Asp444–His448 and Asn498–Asp501 each bind GTP. The G4 stretch occupies residues Asn498 to Asp501. The interval Ser534–Lys536 is G5. Residue Lys808 is modified to N6-acetyllysine.

The protein belongs to the TRAFAC class translation factor GTPase superfamily. Classic translation factor GTPase family. IF-2 subfamily.

The protein resides in the cytoplasm. Functionally, one of the essential components for the initiation of protein synthesis. Protects formylmethionyl-tRNA from spontaneous hydrolysis and promotes its binding to the 30S ribosomal subunits. Also involved in the hydrolysis of GTP during the formation of the 70S ribosomal complex. This Escherichia coli O127:H6 (strain E2348/69 / EPEC) protein is Translation initiation factor IF-2.